The primary structure comprises 212 residues: ATP-dependent dethiobiotin synthetase BioD (212 aa).

Position 13–18 (13–18 (GIGKTV)) interacts with ATP. Residue threonine 17 participates in Mg(2+) binding. Lysine 33 is a catalytic residue. Serine 37 contacts substrate. Mg(2+) is bound at residue glutamate 100. ATP is bound by residues 100 to 103 (EGAG) and 184 to 186 (PLL).

It belongs to the dethiobiotin synthetase family. As to quaternary structure, homodimer. The cofactor is Mg(2+).

The protein resides in the cytoplasm. The enzyme catalyses (7R,8S)-7,8-diammoniononanoate + CO2 + ATP = (4R,5S)-dethiobiotin + ADP + phosphate + 3 H(+). It functions in the pathway cofactor biosynthesis; biotin biosynthesis; biotin from 7,8-diaminononanoate: step 1/2. Catalyzes a mechanistically unusual reaction, the ATP-dependent insertion of CO2 between the N7 and N8 nitrogen atoms of 7,8-diaminopelargonic acid (DAPA, also called 7,8-diammoniononanoate) to form a ureido ring. The polypeptide is ATP-dependent dethiobiotin synthetase BioD (Brucella melitensis biotype 2 (strain ATCC 23457)).